Consider the following 278-residue polypeptide: 4-deoxy-L-threo-5-hexosulose-uronate ketol-isomerase (278 aa).

4 residues coordinate Zn(2+): His-196, His-198, Glu-203, and His-245.

This sequence belongs to the KduI family. Requires Zn(2+) as cofactor.

The catalysed reaction is 5-dehydro-4-deoxy-D-glucuronate = 3-deoxy-D-glycero-2,5-hexodiulosonate. The protein operates within glycan metabolism; pectin degradation; 2-dehydro-3-deoxy-D-gluconate from pectin: step 4/5. Its function is as follows. Catalyzes the isomerization of 5-dehydro-4-deoxy-D-glucuronate to 3-deoxy-D-glycero-2,5-hexodiulosonate. In Salmonella paratyphi A (strain ATCC 9150 / SARB42), this protein is 4-deoxy-L-threo-5-hexosulose-uronate ketol-isomerase.